Here is a 532-residue protein sequence, read N- to C-terminus: Germ cell nuclear acidic-1 protein (532 aa).

The span at 1 to 10 shows a compositional bias: basic and acidic residues; sequence MPTPFRDLHN. Disordered regions lie at residues 1–50, 84–181, and 213–253; these read MPTP…EPIS, REAP…GNFE, and YISE…DRKQ. The span at 14–32 shows a compositional bias: low complexity; it reads ASASSYETAWSSSFSSRRS. Composition is skewed to basic and acidic residues over residues 39–48, 94–107, and 124–133; these read SNLKEIKDEP, LLQK…RDML, and KPKEVKKALK. Positions 213-235 are enriched in acidic residues; it reads YISEESSEEESEEEEEDVDDEEY. Residues 236–251 show a composition bias toward basic and acidic residues; it reads RESSPEVEAKISYSDR. Residues 308–398 enclose the SprT-like domain; that stretch reads RRIFSAIPSE…GARCSSVFKS (91 aa). The segment at 468–489 is disordered; it reads AKPVGPILSNSSKPSPPAPRRI.

Belongs to the serine-aspartate repeat-containing protein (SDr) family. Interacts with top-2; this interaction allows the resolution of topoisomerase II (top-2) DNA-protein cross-links. In terms of tissue distribution, mainly expressed in germ cells and early embryonic, proliferating cells.

The protein localises to the chromosome. Functionally, may play a role in DNA-protein cross-links (DPCs) clearance through a SUMO-dependent recruitment to sites of DPCs, ensuring the genomic stability by protecting germ cells and early embryos from various sources of damage. May resolve the topoisomerase II (top-2) DPCs. Limits replication stress and DNA double-strand breaks. This is Germ cell nuclear acidic-1 protein from Caenorhabditis elegans.